Reading from the N-terminus, the 341-residue chain is L-threonine 3-dehydrogenase (341 aa).

Residue Cys-38 coordinates Zn(2+). Residues Thr-40 and His-43 each act as charge relay system in the active site. 6 residues coordinate Zn(2+): His-63, Glu-64, Cys-93, Cys-96, Cys-99, and Cys-107. Residues Ile-175, Asp-195, Arg-200, 262 to 264 (LGI), and 286 to 287 (IY) each bind NAD(+).

This sequence belongs to the zinc-containing alcohol dehydrogenase family. In terms of assembly, homotetramer. Zn(2+) serves as cofactor.

It is found in the cytoplasm. It carries out the reaction L-threonine + NAD(+) = (2S)-2-amino-3-oxobutanoate + NADH + H(+). It functions in the pathway amino-acid degradation; L-threonine degradation via oxydo-reductase pathway; glycine from L-threonine: step 1/2. Functionally, catalyzes the NAD(+)-dependent oxidation of L-threonine to 2-amino-3-ketobutyrate. This Shewanella sp. (strain W3-18-1) protein is L-threonine 3-dehydrogenase.